The primary structure comprises 130 residues: uncharacterized protein (130 aa).

This is an uncharacterized protein from Bacillus subtilis (strain 168).